Reading from the N-terminus, the 263-residue chain is MRLGLCVVALVLSWTHLTISSRGIKGKRQRRISAEGSQACAKGCELCSEVNGCLKCSPKLFILLERNDIRQVGVCLPSCPPGYFDARNPDMNKCIKCKIEHCEACFSHNFCTKCKEGLYLHKGRCYPACPEGSSAANGTMECSSPAQCEMSEWSPWGPCSKKQQLCGFRRGSEERTRRVLHAPVGDHAACSDTKETRRCTVRRVPCPEGQKRRKGGQGRRENANRNLARKESKEAGAGSRRRKGQQQQQQQGTVGPLTSAGPA.

An N-terminal signal peptide occupies residues 1 to 20; that stretch reads MRLGLCVVALVLSWTHLTIS. 2 FU repeats span residues 34 to 85 and 91 to 135; these read AEGS…GYFD and MNKC…GSSA. 11 disulfides stabilise this stretch: Cys-40–Cys-47, Cys-44–Cys-53, Cys-56–Cys-75, Cys-79–Cys-94, Cys-97–Cys-105, Cys-102–Cys-111, Cys-114–Cys-125, Cys-129–Cys-142, Cys-148–Cys-190, Cys-159–Cys-166, and Cys-199–Cys-206. Asn-137 carries an N-linked (GlcNAc...) asparagine glycan. The region spanning 147-207 is the TSP type-1 domain; sequence QCEMSEWSPW…RCTVRRVPCP (61 aa). C-linked (Man) tryptophan glycans are attached at residues Trp-153 and Trp-156. Positions 206–263 are disordered; it reads CPEGQKRRKGGQGRRENANRNLARKESKEAGAGSRRRKGQQQQQQQGTVGPLTSAGPA. Residues 218 to 234 show a composition bias toward basic and acidic residues; the sequence is GRRENANRNLARKESKE.

Belongs to the R-spondin family. Interacts with the extracellular domain of FZD8 and LRP6. It however does not form a ternary complex with FZD8 and LRP6. Interacts with WNT1. Binds heparin. Interacts with ZNRF3; promoting indirect interaction between ZNRF3 and LGR4 and membrane clearance of ZNRF3. Interacts with LGR4, LGR5 and LGR6. Identified in a complex composed of RNF43, LGR5 and RSPO1. Interacts (via FU repeats) with KREM1. In terms of processing, C-, and N-glycosylated. N-glycosylation at Asn-137, negatively influences its secretion and enhancing effect on Wnt/beta-catenin signaling. C-mannosylation at Trp-156 by DPY19L3 is required for its secretion and regulates the enhancing activity of Wnt signaling. As to expression, abundantly expressed in adrenal glands, ovary, testis, thyroid and trachea but not in bone marrow, spinal cord, stomach, leukocytes colon, small intestine, prostate, thymus and spleen.

The protein localises to the secreted. It localises to the nucleus. Its function is as follows. Activator of the canonical Wnt signaling pathway by acting as a ligand for LGR4-6 receptors. Upon binding to LGR4-6 (LGR4, LGR5 or LGR6), LGR4-6 associate with phosphorylated LRP6 and frizzled receptors that are activated by extracellular Wnt receptors, triggering the canonical Wnt signaling pathway to increase expression of target genes. Also regulates the canonical Wnt/beta-catenin-dependent pathway and non-canonical Wnt signaling by acting as an inhibitor of ZNRF3, an important regulator of the Wnt signaling pathway. Acts as a ligand for frizzled FZD8 and LRP6. May negatively regulate the TGF-beta pathway. Has a essential roles in ovary determination. Regulates Wnt signaling by antagonizing DKK1/KREM1-mediated internalization of LRP6 through an interaction with KREM1. In Homo sapiens (Human), this protein is R-spondin-1 (RSPO1).